The primary structure comprises 286 residues: Energy-coupling factor transporter ATP-binding protein EcfA2 (286 aa).

The ABC transporter domain occupies 3–246 (IQFNQVSYIY…KTQLLKWHIE (244 aa)). Residue 40–47 (GQTGSGKS) participates in ATP binding.

This sequence belongs to the ABC transporter superfamily. Energy-coupling factor EcfA family. As to quaternary structure, forms a stable energy-coupling factor (ECF) transporter complex composed of 2 membrane-embedded substrate-binding proteins (S component), 2 ATP-binding proteins (A component) and 2 transmembrane proteins (T component).

The protein resides in the cell membrane. In terms of biological role, ATP-binding (A) component of a common energy-coupling factor (ECF) ABC-transporter complex. Unlike classic ABC transporters this ECF transporter provides the energy necessary to transport a number of different substrates. In Staphylococcus epidermidis (strain ATCC 12228 / FDA PCI 1200), this protein is Energy-coupling factor transporter ATP-binding protein EcfA2.